A 224-amino-acid polypeptide reads, in one-letter code: Large ribosomal subunit protein uL11c (224 aa).

Residues 1 to 66 (MAQPLVAAPS…SHRRLSIVAM (66 aa)) constitute a chloroplast transit peptide. Lysine 75 and lysine 111 each carry N6,N6,N6-trimethyllysine.

As to quaternary structure, component of the chloroplast large ribosomal subunit (LSU). Mature 70S chloroplast ribosomes of higher plants consist of a small (30S) and a large (50S) subunit. The 30S small subunit contains 1 molecule of ribosomal RNA (16S rRNA) and 24 different proteins. The 50S large subunit contains 3 rRNA molecules (23S, 5S and 4.5S rRNA) and 33 different proteins.

It is found in the plastid. It localises to the chloroplast. Its function is as follows. Component of the chloroplast ribosome (chloro-ribosome), a dedicated translation machinery responsible for the synthesis of chloroplast genome-encoded proteins, including proteins of the transcription and translation machinery and components of the photosynthetic apparatus. The sequence is that of Large ribosomal subunit protein uL11c (rpl11) from Spinacia oleracea (Spinach).